The chain runs to 434 residues: Ribitol-5-phosphate xylosyltransferase 1 (434 aa).

The Cytoplasmic portion of the chain corresponds to 1-7 (MRFFRRK). The helical; Signal-anchor for type II membrane protein transmembrane segment at 8–28 (IAIIVILAYAIFSLYAAYNVF) threads the bilayer. Topologically, residues 29-434 (FSKRVISRVH…VLEENFFKIT (406 aa)) are extracellular.

This sequence belongs to the TMEM5 family.

The protein localises to the golgi apparatus membrane. It carries out the reaction 3-O-[Rib-ol-P-Rib-ol-P-3-beta-D-GalNAc-(1-&gt;3)-beta-D-GlcNAc-(1-&gt;4)-(O-6-P-alpha-D-Man)]-Thr-[protein] + UDP-alpha-D-xylose = 3-O-[beta-D-Xyl-(1-&gt;4)-Rib-ol-P-Rib-ol-P-3-beta-D-GalNAc-(1-&gt;3)-beta-D-GlcNAc-(1-&gt;4)-(O-6-P-alpha-D-Man)]-Thr-[protein] + UDP + H(+). It functions in the pathway protein modification; protein glycosylation. In terms of biological role, acts as a UDP-D-xylose:ribitol-5-phosphate beta1,4-xylosyltransferase, which catalyzes the transfer of UDP-D-xylose to ribitol 5-phosphate (Rbo5P) to form the Xylbeta1-4Rbo5P linkage on O-mannosyl glycan. Participates in the biosynthesis of the phosphorylated O-mannosyl trisaccharide (N-acetylgalactosamine-beta-3-N-acetylglucosamine-beta-4-(phosphate-6-)mannose), a carbohydrate structure present in alpha-dystroglycan (DAG1), which is required for binding laminin G-like domain-containing extracellular proteins with high affinity. In Danio rerio (Zebrafish), this protein is Ribitol-5-phosphate xylosyltransferase 1 (rxylt1).